We begin with the raw amino-acid sequence, 208 residues long: MSAILGKKIGMTSLFDENRKAIPCTVIEAGPCFVSQVKTVDKDGYAAYQICFDKKKENRTAKPQLGHFQKSGVEPSYKMSEFRKEIFADELNAGDEVKVSIFKEGDTVKVSGVSKGKGFAGVVKRYHFGGGSKTHGQSDRLRAPGSVGGSSFPSRTFKGQRMAGRKGSDSVTIRGLKVVKVLPESNLLVIKGAVPGPNNSYLEIVTSK.

The disordered stretch occupies residues 130–168; the sequence is GGSKTHGQSDRLRAPGSVGGSSFPSRTFKGQRMAGRKGS.

This sequence belongs to the universal ribosomal protein uL3 family. As to quaternary structure, part of the 50S ribosomal subunit. Forms a cluster with proteins L14 and L19.

Its function is as follows. One of the primary rRNA binding proteins, it binds directly near the 3'-end of the 23S rRNA, where it nucleates assembly of the 50S subunit. The sequence is that of Large ribosomal subunit protein uL3 from Chloroherpeton thalassium (strain ATCC 35110 / GB-78).